The chain runs to 80 residues: ATP synthase subunit c (80 aa).

Transmembrane regions (helical) follow at residues 11–31 (MAAAVMMGLAAIGAAIGIGIL) and 53–73 (FFVVMGLVDAIPMIAVGLGLY).

This sequence belongs to the ATPase C chain family. F-type ATPases have 2 components, F(1) - the catalytic core - and F(0) - the membrane proton channel. F(1) has five subunits: alpha(3), beta(3), gamma(1), delta(1), epsilon(1). F(0) has three main subunits: a(1), b(2) and c(10-14). The alpha and beta chains form an alternating ring which encloses part of the gamma chain. F(1) is attached to F(0) by a central stalk formed by the gamma and epsilon chains, while a peripheral stalk is formed by the delta and b chains.

Its subcellular location is the cell inner membrane. Functionally, f(1)F(0) ATP synthase produces ATP from ADP in the presence of a proton or sodium gradient. F-type ATPases consist of two structural domains, F(1) containing the extramembraneous catalytic core and F(0) containing the membrane proton channel, linked together by a central stalk and a peripheral stalk. During catalysis, ATP synthesis in the catalytic domain of F(1) is coupled via a rotary mechanism of the central stalk subunits to proton translocation. Key component of the F(0) channel; it plays a direct role in translocation across the membrane. A homomeric c-ring of between 10-14 subunits forms the central stalk rotor element with the F(1) delta and epsilon subunits. The polypeptide is ATP synthase subunit c (Erwinia tasmaniensis (strain DSM 17950 / CFBP 7177 / CIP 109463 / NCPPB 4357 / Et1/99)).